Consider the following 564-residue polypeptide: Kelch-like protein 12 (564 aa).

The BTB domain occupies cysteine 29–valine 96. The 102-residue stretch at cysteine 131 to isoleucine 232 folds into the BACK domain. Kelch repeat units follow at residues valine 278–aspartate 325, valine 327–aspartate 375, methionine 376–glycine 422, leucine 423–aspartate 469, isoleucine 471–glycine 516, and leucine 518–glutamate 563.

As to quaternary structure, component of the BCR(KLHL12) E3 ubiquitin ligase complex.

It is found in the cytoplasmic vesicle. The protein localises to the COPII-coated vesicle. Its pathway is protein modification; protein ubiquitination. Functionally, substrate-specific adapter of a BCR (BTB-CUL3-RBX1) E3 ubiquitin ligase complex that acts as a negative regulator of Wnt signaling pathway and ER-Golgi transport. The BCR(KLHL12) complex is involved in ER-Golgi transport by regulating the size of COPII coats, thereby playing a key role in collagen export, which is required for embryonic stem (ES) cells division. Negatively regulates the Wnt signaling pathway, possibly via the targeted ubiquitination and subsequent proteolysis of dvl2 and dvl3. Regulates convergent-extension movements during early embryonic development. The sequence is that of Kelch-like protein 12 (klhl12) from Danio rerio (Zebrafish).